The sequence spans 319 residues: ATP-dependent 6-phosphofructokinase (319 aa).

Residue G11 coordinates ATP. Residue 21 to 25 (RAVVR) participates in ADP binding. ATP is bound by residues 72-73 (RY) and 102-105 (GDGS). D103 lines the Mg(2+) pocket. Position 125 to 127 (125 to 127 (TID)) interacts with substrate. The active-site Proton acceptor is the D127. R154 is an ADP binding site. Substrate-binding positions include R162 and 169–171 (MGR). ADP is bound by residues 185–187 (GAE), R211, and 213–215 (KKH). Substrate-binding positions include E222, R243, and 249–252 (HVQR).

This sequence belongs to the phosphofructokinase type A (PFKA) family. ATP-dependent PFK group I subfamily. Prokaryotic clade 'B1' sub-subfamily. As to quaternary structure, homotetramer. Mg(2+) is required as a cofactor.

The protein resides in the cytoplasm. The catalysed reaction is beta-D-fructose 6-phosphate + ATP = beta-D-fructose 1,6-bisphosphate + ADP + H(+). It functions in the pathway carbohydrate degradation; glycolysis; D-glyceraldehyde 3-phosphate and glycerone phosphate from D-glucose: step 3/4. Allosterically activated by ADP and other diphosphonucleosides, and allosterically inhibited by phosphoenolpyruvate. Functionally, catalyzes the phosphorylation of D-fructose 6-phosphate to fructose 1,6-bisphosphate by ATP, the first committing step of glycolysis. The chain is ATP-dependent 6-phosphofructokinase from Listeria monocytogenes serotype 4a (strain HCC23).